Here is an 86-residue protein sequence, read N- to C-terminus: Large ribosomal subunit protein bL31B (86 aa).

The protein belongs to the bacterial ribosomal protein bL31 family. Type B subfamily. As to quaternary structure, part of the 50S ribosomal subunit.

This Streptococcus pyogenes serotype M1 protein is Large ribosomal subunit protein bL31B.